Reading from the N-terminus, the 466-residue chain is Oryzain beta chain (466 aa).

The first 21 residues, methionine 1–alanine 21, serve as a signal peptide directing secretion. The propeptide at alanine 22–glutamate 140 is activation peptide. 3 disulfide bridges follow: cysteine 162–cysteine 205, cysteine 196–cysteine 238, and cysteine 296–cysteine 347. The active site involves cysteine 165. Residues histidine 302 and asparagine 322 contribute to the active site. Asparagine 341 carries an N-linked (GlcNAc...) asparagine glycan. The interval lysine 358–serine 380 is disordered. Positions asparagine 362–alanine 466 are cleaved as a propeptide — removed in mature form. Residues proline 363 to serine 380 show a composition bias toward pro residues. Intrachain disulfides connect cysteine 386–cysteine 398 and cysteine 392–cysteine 413. Asparagine 389 carries N-linked (GlcNAc...) asparagine glycosylation.

It belongs to the peptidase C1 family. In terms of tissue distribution, expressed only in seeds.

Functionally, probable thiol protease. The protein is Oryzain beta chain of Oryza sativa subsp. japonica (Rice).